The following is an 862-amino-acid chain: Linoleate 9S-lipoxygenase 1 (862 aa).

The 128-residue stretch at 44–171 (FGAATDIVGG…SYKRDRIFFA (128 aa)) folds into the PLAT domain. The Lipoxygenase domain occupies 174–862 (TYLPNETPAS…FRGIPNSISI (689 aa)). Positions 225–257 (KNLARTTLGGSSDFPYPRRGRTGRKSTRKDPKC) are disordered. Positions 242–251 (RRGRTGRKST) are enriched in basic residues. Fe cation-binding residues include H522, H527, H713, N717, and I862.

It belongs to the lipoxygenase family. In terms of assembly, monomer. Fe cation serves as cofactor.

The protein localises to the cytoplasm. It carries out the reaction (9Z,12Z)-octadecadienoate + O2 = (13S)-hydroperoxy-(9Z,11E)-octadecadienoate. The enzyme catalyses (9Z,12Z,15Z)-octadecatrienoate + O2 = (13S)-hydroperoxy-(9Z,11E,15Z)-octadecatrienoate. The catalysed reaction is (9Z,12Z)-octadecadienoate + O2 = (9S)-hydroperoxy-(10E,12Z)-octadecadienoate. The protein operates within lipid metabolism; oxylipin biosynthesis. Plant lipoxygenase may be involved in a number of diverse aspects of plant physiology including growth and development, pest resistance, and senescence or responses to wounding. It catalyzes the hydroperoxidation of lipids containing a cis,cis-1,4-pentadiene structure. The protein is Linoleate 9S-lipoxygenase 1 (LOXA) of Phaseolus vulgaris (Kidney bean).